Here is a 122-residue protein sequence, read N- to C-terminus: Large ribosomal subunit protein uL14 (122 aa).

This sequence belongs to the universal ribosomal protein uL14 family. In terms of assembly, part of the 50S ribosomal subunit. Forms a cluster with proteins L3 and L19. In the 70S ribosome, L14 and L19 interact and together make contacts with the 16S rRNA in bridges B5 and B8.

In terms of biological role, binds to 23S rRNA. Forms part of two intersubunit bridges in the 70S ribosome. The chain is Large ribosomal subunit protein uL14 from Acidovorax sp. (strain JS42).